Here is a 503-residue protein sequence, read N- to C-terminus: Probable cytosol aminopeptidase (503 aa).

Mn(2+) is bound by residues Lys274 and Asp279. The active site involves Lys286. The Mn(2+) site is built by Asp297, Asp356, and Glu358. Arg360 is an active-site residue.

This sequence belongs to the peptidase M17 family. It depends on Mn(2+) as a cofactor.

It localises to the cytoplasm. It carries out the reaction Release of an N-terminal amino acid, Xaa-|-Yaa-, in which Xaa is preferably Leu, but may be other amino acids including Pro although not Arg or Lys, and Yaa may be Pro. Amino acid amides and methyl esters are also readily hydrolyzed, but rates on arylamides are exceedingly low.. The catalysed reaction is Release of an N-terminal amino acid, preferentially leucine, but not glutamic or aspartic acids.. Its function is as follows. Presumably involved in the processing and regular turnover of intracellular proteins. Catalyzes the removal of unsubstituted N-terminal amino acids from various peptides. This chain is Probable cytosol aminopeptidase, found in Burkholderia ambifaria (strain MC40-6).